The primary structure comprises 235 residues: Ferric nitrobindin-like protein (235 aa).

The segment at 1 to 59 (MSDLASEGSDPAERASEHSNGNAPADRPARRSGDQAVADAAERAKATGSRNIPVLPDLP) is disordered. The GXWXGXG signature appears at 85 to 91 (GVWRGEG).

It belongs to the nitrobindin family.

In Nocardia farcinica (strain IFM 10152), this protein is Ferric nitrobindin-like protein.